Consider the following 312-residue polypeptide: uncharacterized protein (312 aa).

This is an uncharacterized protein from Escherichia coli (strain K12).